Reading from the N-terminus, the 70-residue chain is Cytochrome c oxidase subunit 8B, mitochondrial (70 aa).

Residues 1–24 (MPRLPPALRLLQPPLRCWVVPKLH) constitute a mitochondrion transit peptide. The Mitochondrial matrix segment spans residues 25–35 (VSAKPARTPTS). The chain crosses the membrane as a helical span at residues 36-59 (PAEQAVGLSMMFLSFLVPAGWVLS). Over 60–70 (HLESYKKSSTA) the chain is Mitochondrial intermembrane.

It belongs to the cytochrome c oxidase VIII family. Component of the cytochrome c oxidase (complex IV, CIV), a multisubunit enzyme composed of 14 subunits. The complex is composed of a catalytic core of 3 subunits MT-CO1, MT-CO2 and MT-CO3, encoded in the mitochondrial DNA, and 11 supernumerary subunits COX4I, COX5A, COX5B, COX6A, COX6B, COX6C, COX7A, COX7B, COX7C, COX8 and NDUFA4, which are encoded in the nuclear genome. The complex exists as a monomer or a dimer and forms supercomplexes (SCs) in the inner mitochondrial membrane with NADH-ubiquinone oxidoreductase (complex I, CI) and ubiquinol-cytochrome c oxidoreductase (cytochrome b-c1 complex, complex III, CIII), resulting in different assemblies (supercomplex SCI(1)III(2)IV(1) and megacomplex MCI(2)III(2)IV(2)).

The protein resides in the mitochondrion inner membrane. The protein operates within energy metabolism; oxidative phosphorylation. Its function is as follows. Component of the cytochrome c oxidase, the last enzyme in the mitochondrial electron transport chain which drives oxidative phosphorylation. The respiratory chain contains 3 multisubunit complexes succinate dehydrogenase (complex II, CII), ubiquinol-cytochrome c oxidoreductase (cytochrome b-c1 complex, complex III, CIII) and cytochrome c oxidase (complex IV, CIV), that cooperate to transfer electrons derived from NADH and succinate to molecular oxygen, creating an electrochemical gradient over the inner membrane that drives transmembrane transport and the ATP synthase. Cytochrome c oxidase is the component of the respiratory chain that catalyzes the reduction of oxygen to water. Electrons originating from reduced cytochrome c in the intermembrane space (IMS) are transferred via the dinuclear copper A center (CU(A)) of subunit 2 and heme A of subunit 1 to the active site in subunit 1, a binuclear center (BNC) formed by heme A3 and copper B (CU(B)). The BNC reduces molecular oxygen to 2 water molecules using 4 electrons from cytochrome c in the IMS and 4 protons from the mitochondrial matrix. The sequence is that of Cytochrome c oxidase subunit 8B, mitochondrial (COX8B) from Eulemur fulvus fulvus (Brown lemur).